Consider the following 246-residue polypeptide: E3 ubiquitin-protein ligase MARCHF2 (246 aa).

The RING-CH-type zinc finger occupies 56-116; it reads GTQSDGPICR…ELCHTEFAVE (61 aa). 8 residues coordinate Zn(2+): cysteine 64, cysteine 67, cysteine 80, cysteine 82, histidine 90, cysteine 93, cysteine 106, and cysteine 109. Transmembrane regions (helical) follow at residues 138–158 and 175–195; these read LFCD…SGWL and AVGL…WTLV.

The protein resides in the endoplasmic reticulum membrane. Its subcellular location is the lysosome membrane. The protein localises to the endosome membrane. It carries out the reaction S-ubiquitinyl-[E2 ubiquitin-conjugating enzyme]-L-cysteine + [acceptor protein]-L-lysine = [E2 ubiquitin-conjugating enzyme]-L-cysteine + N(6)-ubiquitinyl-[acceptor protein]-L-lysine.. Its pathway is protein modification; protein ubiquitination. E3 ubiquitin-protein ligase which may be involved in endosomal trafficking. E3 ubiquitin ligases accept ubiquitin from an E2 ubiquitin-conjugating enzyme in the form of a thioester and then directly transfer the ubiquitin to targeted substrates. This is E3 ubiquitin-protein ligase MARCHF2 (marchf2) from Xenopus tropicalis (Western clawed frog).